Reading from the N-terminus, the 450-residue chain is Phosphoglucosamine mutase (450 aa).

The active-site Phosphoserine intermediate is the S101. Mg(2+) is bound by residues S101, D241, D243, and D245. S101 is modified (phosphoserine).

The protein belongs to the phosphohexose mutase family. Mg(2+) is required as a cofactor. Activated by phosphorylation.

It catalyses the reaction alpha-D-glucosamine 1-phosphate = D-glucosamine 6-phosphate. Functionally, catalyzes the conversion of glucosamine-6-phosphate to glucosamine-1-phosphate. This chain is Phosphoglucosamine mutase, found in Listeria monocytogenes serovar 1/2a (strain ATCC BAA-679 / EGD-e).